The following is a 509-amino-acid chain: Anaerobic nitric oxide reductase flavorubredoxin (509 aa).

Residues 30 to 210 are zinc metallo-hydrolase; that stretch reads LQGSSYNSYL…PFSRLVTAKI (181 aa). Positions 79, 81, 83, 147, 166, and 227 each coordinate Fe cation. Residues 254–393 enclose the Flavodoxin-like domain; the sequence is ITLFYDTMSN…VCREHGREIA (140 aa). Residues 260–264 and 342–369 each bind FMN; these read TMSNN and AFGSYGWNGGAVDRVQTRLMDAGFETTL. One can recognise a Rubredoxin-like domain in the interval 457–508; that stretch reads SGCMQCSVCQWIYDPALGEPMQDVTPGTMWSDVPDSFLCPECGLGKDVFNPI. Positions 462, 465, 495, and 498 each coordinate Fe cation.

It in the N-terminal section; belongs to the zinc metallo-hydrolase group 3 family. As to quaternary structure, homotetramer. The cofactor is Fe cation. Requires FMN as cofactor.

Its subcellular location is the cytoplasm. It functions in the pathway nitrogen metabolism; nitric oxide reduction. Its function is as follows. Anaerobic nitric oxide reductase; uses NADH to detoxify nitric oxide (NO), protecting several 4Fe-4S NO-sensitive enzymes. Has at least 2 reductase partners, only one of which (NorW, flavorubredoxin reductase) has been identified. NO probably binds to the di-iron center; electrons enter from the NorW at rubredoxin and are transferred sequentially to the FMN center and the di-iron center. Also able to function as an aerobic oxygen reductase. The sequence is that of Anaerobic nitric oxide reductase flavorubredoxin from Pectobacterium atrosepticum (strain SCRI 1043 / ATCC BAA-672) (Erwinia carotovora subsp. atroseptica).